The sequence spans 37 residues: Somatostatin-37 (37 aa).

Positions Ala-1–Leu-2 are excised as a propeptide. Cysteines 26 and 37 form a disulfide.

Belongs to the somatostatin family.

The protein localises to the secreted. Somatostatin inhibits the release of somatotropin. The protein is Somatostatin-37 (sst) of Petromyzon marinus (Sea lamprey).